Consider the following 395-residue polypeptide: ATP phosphoribosyltransferase regulatory subunit (395 aa).

It belongs to the class-II aminoacyl-tRNA synthetase family. HisZ subfamily. In terms of assembly, heteromultimer composed of HisG and HisZ subunits.

It is found in the cytoplasm. It functions in the pathway amino-acid biosynthesis; L-histidine biosynthesis; L-histidine from 5-phospho-alpha-D-ribose 1-diphosphate: step 1/9. In terms of biological role, required for the first step of histidine biosynthesis. May allow the feedback regulation of ATP phosphoribosyltransferase activity by histidine. The protein is ATP phosphoribosyltransferase regulatory subunit of Pseudomonas entomophila (strain L48).